A 100-amino-acid polypeptide reads, in one-letter code: Osteocalcin (100 aa).

Positions 1–23 (MRALTLLALLALAALCIAGQAGA) are cleaved as a signal peptide. Positions 24 to 51 (KPSGAESSKGAAFVSKQEGSEVVKRPRR) are excised as a propeptide. The Gla domain occupies 52-98 (YLYQWLGAPVPYPDTLEPRREVCELNPDCDELADHIGFQEAYRRFYG). Residues Glu-68, Glu-72, Glu-75, and Asp-81 each coordinate Ca(2+). Residues Glu-68, Glu-72, and Glu-75 each carry the 4-carboxyglutamate modification. A disulfide bridge connects residues Cys-74 and Cys-80.

Belongs to the osteocalcin/matrix Gla protein family. In terms of processing, gamma-carboxyglutamate residues are formed by vitamin K dependent carboxylation by GGCX. These residues are essential for the binding of calcium. Decarboxylation promotes the hormone activity.

The protein localises to the secreted. The carboxylated form is one of the main organic components of the bone matrix, which constitutes 1-2% of the total bone protein: it acts as a negative regulator of bone formation and is required to limit bone formation without impairing bone resorption or mineralization. The carboxylated form binds strongly to apatite and calcium. In terms of biological role, the uncarboxylated form acts as a hormone secreted by osteoblasts, which regulates different cellular processes, such as energy metabolism, male fertility and brain development. Regulates of energy metabolism by acting as a hormone favoring pancreatic beta-cell proliferation, insulin secretion and sensitivity and energy expenditure. Uncarboxylated osteocalcin hormone also promotes testosterone production in the testes: acts as a ligand for G protein-coupled receptor GPRC6A at the surface of Leydig cells, initiating a signaling response that promotes the expression of enzymes required for testosterone synthesis in a CREB-dependent manner. Also acts as a regulator of brain development: osteocalcin hormone crosses the blood-brain barrier and acts as a ligand for GPR158 on neurons, initiating a signaling response that prevents neuronal apoptosis in the hippocampus, favors the synthesis of all monoamine neurotransmitters and inhibits that of gamma-aminobutyric acid (GABA). Osteocalcin also crosses the placenta during pregnancy and maternal osteocalcin is required for fetal brain development. The polypeptide is Osteocalcin (Pan troglodytes (Chimpanzee)).